Consider the following 141-residue polypeptide: Nucleoside diphosphate kinase (141 aa).

ATP contacts are provided by Lys11, Phe59, Arg87, Thr93, Arg104, and Asn114. The Pros-phosphohistidine intermediate role is filled by His117.

The protein belongs to the NDK family. Homotetramer. Mg(2+) is required as a cofactor.

The protein localises to the cytoplasm. The enzyme catalyses a 2'-deoxyribonucleoside 5'-diphosphate + ATP = a 2'-deoxyribonucleoside 5'-triphosphate + ADP. The catalysed reaction is a ribonucleoside 5'-diphosphate + ATP = a ribonucleoside 5'-triphosphate + ADP. Functionally, major role in the synthesis of nucleoside triphosphates other than ATP. The ATP gamma phosphate is transferred to the NDP beta phosphate via a ping-pong mechanism, using a phosphorylated active-site intermediate. The chain is Nucleoside diphosphate kinase from Legionella pneumophila (strain Lens).